The chain runs to 146 residues: Prefoldin subunit alpha (146 aa).

The protein belongs to the prefoldin alpha subunit family. As to quaternary structure, heterohexamer of two alpha and four beta subunits.

It is found in the cytoplasm. Molecular chaperone capable of stabilizing a range of proteins. Seems to fulfill an ATP-independent, HSP70-like function in archaeal de novo protein folding. This Methanococcus vannielii (strain ATCC 35089 / DSM 1224 / JCM 13029 / OCM 148 / SB) protein is Prefoldin subunit alpha.